Here is a 270-residue protein sequence, read N- to C-terminus: Phosphatidylinositol transfer protein alpha isoform (270 aa).

A 1,2-diacyl-sn-glycero-3-phospho-(1D-myo-inositol)-binding residues include T58, K60, E85, N89, T96, and K194. N6-acetyllysine is present on K215. Residues 250–263 (TKRQLDEMRQKDPV) are compositionally biased toward basic and acidic residues. The interval 250–270 (TKRQLDEMRQKDPVKGMTADD) is disordered.

This sequence belongs to the PtdIns transfer protein family. PI transfer class I subfamily.

The protein localises to the cytoplasm. It localises to the nucleus. It carries out the reaction a 1,2-diacyl-sn-glycero-3-phosphocholine(in) = a 1,2-diacyl-sn-glycero-3-phosphocholine(out). It catalyses the reaction a 1,2-diacyl-sn-glycero-3-phospho-(1D-myo-inositol)(in) = a 1,2-diacyl-sn-glycero-3-phospho-(1D-myo-inositol)(out). Phosphatidylinositol transfer activity is inhibited by N-ethylmaleimide. Catalyzes the transfer of phosphatidylinositol (PI) and phosphatidylcholine (PC) between membranes. Shows a preference for PI and PC containing shorter saturated or monosaturated acyl chains at the sn-1 and sn-2 positions. Preference order for PC is C16:1 &gt; C16:0 &gt; C18:1 &gt; C18:0 &gt; C20:4 and for PI is C16:1 &gt; C16:0 &gt; C18:1 &gt; C18:0 &gt; C20:4 &gt; C20:3. The protein is Phosphatidylinositol transfer protein alpha isoform (PITPNA) of Homo sapiens (Human).